Here is a 64-residue protein sequence, read N- to C-terminus: Temporin-ALf (64 aa).

Residues 1–22 (MFTLKKSLLLLFFLGTINLSLC) form the signal peptide. Residues 23–46 (EQERNAEEERRDEPDERNAEVEKR) constitute a propeptide that is removed on maturation. Leu-62 carries the leucine amide modification.

As to expression, expressed by the skin glands.

Its subcellular location is the secreted. Functionally, antimicrobial peptide with activity against Gram-positive and Gram-negative bacteria and against fungi. Has been tested against S.aureus (MIC=2.5 ug/mL), B.pumilus (MIC=5.0 ug/mL), B.cereus (MIC=30.0 ug/mL), E.coli (MIC=2.5 ug/mL), B.dysenteriae (MIC=5.0 ug/mL), A.cacoaceticus (MIC=30.0 ug/mL), P.aeruginosa (MIC=5.0 ug/mL) and C.albicans (MIC=2.5 ug/mL). Also shows a weak hemolytic activity. This is Temporin-ALf from Amolops loloensis (Lolokou Sucker Frog).